Here is a 133-residue protein sequence, read N- to C-terminus: MKTFPVSIVTPDGPVYEKEVEMVSVKAESGEMGILPGHIPTVAPLKISAVRLKNGGHTDYVAVSGGFIEVRPDKVTVLATSAEEANHIDTHRANEAKRRAEQRLQDKQAHVDFKRAELALKRAINRLDVSNMK.

The protein belongs to the ATPase epsilon chain family. F-type ATPases have 2 components, CF(1) - the catalytic core - and CF(0) - the membrane proton channel. CF(1) has five subunits: alpha(3), beta(3), gamma(1), delta(1), epsilon(1). CF(0) has three main subunits: a, b and c.

It localises to the cell membrane. Functionally, produces ATP from ADP in the presence of a proton gradient across the membrane. This Bacillus cytotoxicus (strain DSM 22905 / CIP 110041 / 391-98 / NVH 391-98) protein is ATP synthase epsilon chain.